A 382-amino-acid polypeptide reads, in one-letter code: Mucosal addressin cell adhesion molecule 1 (382 aa).

The signal sequence occupies residues 1–18 (MDFGLALLLAGLLGLLLG). At 19-317 (QSLQVKPLQV…TGSSKPAGDQ (299 aa)) the chain is on the extracellular side. Ig-like domains are found at residues 23-112 (VKPL…LLVY) and 113-231 (AFPD…TSPE). 3 disulfide bridges follow: C47/C94, C51/C98, and C134/C204. An N-linked (GlcNAc...) asparagine glycan is attached at N83. The interval 223 to 314 (VLHSPTSPEP…VIPTGSSKPA (92 aa)) is disordered. Residues 226–317 (SPTSPEPPDT…TGSSKPAGDQ (92 aa)) form a mucin-like region. Residues 228–231 (TSPE) form a 1; truncated repeat. The interval 228-271 (TSPEPPDTTSPESPDTTSPESPDTTSQEPPDTTSPEPPDKTSPE) is 5.5 X 8 AA tandem repeats of [PS]-P-D-T-T-S-[QP]-E. 5 consecutive repeat copies span residues 232-239 (PPDTTSPE), 240-247 (SPDTTSPE), 248-255 (SPDTTSQE), 256-263 (PPDTTSPE), and 264-271 (PPDKTSPE). Positions 236–261 (TSPESPDTTSPESPDTTSQEPPDTTS) are enriched in low complexity. Positions 277-288 (GSTHTPRSPGST) are enriched in low complexity. The chain crosses the membrane as a helical span at residues 318-338 (LPAALWTSSAVLGLLLLALPT). The Cytoplasmic segment spans residues 339–382 (YHLWKRCRHLAEDDTHPPASLRLLPQVSAWAGLRGTGQVGISPS).

Homodimer. Post-translationally, the Ser/Thr-rich mucin-like domain may provide possible sites for O-glycosylation. Highly expressed on high endothelial venules (HEV) and lamina propia venules found in the small intestine, and to a lesser extent in the colon and spleen. Very low levels of expression found in pancreas and brain. Not expressed in the thymus, prostate, ovaries, testis, heart, placenta, lung, liver, skeletal muscle, kidney or peripheral blood leukocytes.

It is found in the membrane. Functionally, cell adhesion leukocyte receptor expressed by mucosal venules, helps to direct lymphocyte traffic into mucosal tissues including the Peyer patches and the intestinal lamina propria. It can bind both integrin alpha-4/beta-7 and L-selectin, regulating both the passage and retention of leukocytes. Isoform 2, lacking the mucin-like domain, may be specialized in supporting integrin alpha-4/beta-7-dependent adhesion strengthening, independent of L-selectin binding. This chain is Mucosal addressin cell adhesion molecule 1 (MADCAM1), found in Homo sapiens (Human).